The sequence spans 281 residues: 4-diphosphocytidyl-2-C-methyl-D-erythritol kinase (281 aa).

K15 is an active-site residue. 98–108 (PTGAGLGGGSS) provides a ligand contact to ATP. The active site involves D140.

This sequence belongs to the GHMP kinase family. IspE subfamily.

The catalysed reaction is 4-CDP-2-C-methyl-D-erythritol + ATP = 4-CDP-2-C-methyl-D-erythritol 2-phosphate + ADP + H(+). It functions in the pathway isoprenoid biosynthesis; isopentenyl diphosphate biosynthesis via DXP pathway; isopentenyl diphosphate from 1-deoxy-D-xylulose 5-phosphate: step 3/6. In terms of biological role, catalyzes the phosphorylation of the position 2 hydroxy group of 4-diphosphocytidyl-2C-methyl-D-erythritol. In Neisseria meningitidis serogroup C (strain 053442), this protein is 4-diphosphocytidyl-2-C-methyl-D-erythritol kinase.